The following is a 274-amino-acid chain: Beta-lysine N(6)-acetyltransferase (274 aa).

Residues 123–274 (FHLKIANETD…DMNFWYKLSE (152 aa)) enclose the N-acetyltransferase domain.

It belongs to the acetyltransferase family.

It carries out the reaction (3S)-3,6-diaminohexanoate + acetyl-CoA = (3S)-6-acetamido-3-aminohexanoate + CoA + H(+). Functionally, catalyzes the acetylation of beta-lysine to N6-acetyl-beta-lysine, a compatible solute produced by methanogenic archaea that helps cells to cope with salt stress. The polypeptide is Beta-lysine N(6)-acetyltransferase (Methanococcus maripaludis (strain DSM 14266 / JCM 13030 / NBRC 101832 / S2 / LL)).